The chain runs to 377 residues: Succinyl-diaminopimelate desuccinylase (377 aa).

H67 contributes to the Zn(2+) binding site. Residue D69 is part of the active site. D100 lines the Zn(2+) pocket. E134 functions as the Proton acceptor in the catalytic mechanism. Zn(2+)-binding residues include E135, E163, and H349.

Belongs to the peptidase M20A family. DapE subfamily. Homodimer. The cofactor is Zn(2+). Co(2+) is required as a cofactor.

It carries out the reaction N-succinyl-(2S,6S)-2,6-diaminopimelate + H2O = (2S,6S)-2,6-diaminopimelate + succinate. The protein operates within amino-acid biosynthesis; L-lysine biosynthesis via DAP pathway; LL-2,6-diaminopimelate from (S)-tetrahydrodipicolinate (succinylase route): step 3/3. In terms of biological role, catalyzes the hydrolysis of N-succinyl-L,L-diaminopimelic acid (SDAP), forming succinate and LL-2,6-diaminopimelate (DAP), an intermediate involved in the bacterial biosynthesis of lysine and meso-diaminopimelic acid, an essential component of bacterial cell walls. The protein is Succinyl-diaminopimelate desuccinylase of Haemophilus influenzae (strain 86-028NP).